Consider the following 202-residue polypeptide: MEEQEIITTLKILIIGESGVGKSSLLLRFTEDTFDPEQAATIGVDFKVKTLTVEGNKTKLAIWDTAGQERFRTLTPSYYRGAQGVILVYDVSSKQSFNKLDAWLNELETFSTKHDMVKMLVGNKIDRANHEVTKDEGLKFARKHHMLFIEASAKTNDGVQCAFEELVEKIIQTPGLWETSSKNLTLSNHGPEGQGQSCYCVL.

Positions 18, 21, 22, 23, 24, 35, 36, 41, 67, 124, 126, and 153 each coordinate GTP. The Effector region motif lies at Gln-38–Phe-46. 2 S-geranylgeranyl cysteine lipidation sites follow: Cys-198 and Cys-200.

This sequence belongs to the small GTPase superfamily. Rab family.

The protein resides in the cell membrane. It catalyses the reaction GTP + H2O = GDP + phosphate + H(+). Its function is as follows. The small GTPases Rab are key regulators of intracellular membrane trafficking, from the formation of transport vesicles to their fusion with membranes. Rabs cycle between an inactive GDP-bound form and an active GTP-bound form that is able to recruit to membranes different sets of downstream effectors directly responsible for vesicle formation, movement, tethering and fusion. This is Ras-related protein Rab-18 (RAB18A) from Lymnaea stagnalis (Great pond snail).